The following is a 393-amino-acid chain: Cysteine protease ATG4B (393 aa).

At methionine 1 the chain carries N-acetylmethionine. Serine 34 carries the post-translational modification Phosphoserine. Cysteine 74 (nucleophile) is an active-site residue. Cysteine 189 carries the post-translational modification S-nitrosocysteine. Active-site residues include aspartate 278 and histidine 280. Cysteine 292 and cysteine 301 each carry S-nitrosocysteine. Cysteine 292 and cysteine 361 are joined by a disulfide. Phosphoserine occurs at positions 316 and 383. An LIR motif is present at residues 388 to 391 (FEIL). Serine 392 carries the post-translational modification Phosphoserine.

The protein belongs to the peptidase C54 family. Interacts with PFKP; promoting phosphorylation of ATG4B at Ser-34. Interacts with GBP7. In terms of processing, phosphorylation at Ser-383 and Ser-392 promotes autophagy by increasing protein delipidation activity without affecting proteolytic activation of ATG8 proteins. Phosphorylation at Ser-316 by ULK1 inhibits autophagy by decreasing both proteolytic activation and delipidation activities. Phosphorylation at Ser-316 is dephosphorylated by protein phosphatase 2A (PP2A). Phosphorylation at Ser-34 by AKT2 promotes its hydrolase activity, leading to increased proteolytic activation and delipidation of ATG8 family proteins. Phosphorylation at Ser-34 by AKT1 promotes mitochondrial localization and inhibition of the F1F0-ATP synthase activity, leading to elevation of mitochondrial reactive oxygen species (ROS). Post-translationally, ubiquitinated by RNF5, leading to its degradation by the proteasome. S-nitrosylation in response to high glucose decreases both proteolytic activation and delipidation activities. In terms of processing, O-glycosylated by OGT, leading to increase protease activity, thereby promoting the proteolytic activation of ATG8 family proteins. Post-translationally, forms reversible intrachain disulfide bonds in response to oxidative stress. Forms interchain disulfide bonds, leading to formation of homooligomers in response to oxidation.

The protein localises to the cytoplasm. Its subcellular location is the cytosol. The protein resides in the cytoplasmic vesicle. It is found in the autophagosome. It localises to the endoplasmic reticulum. The protein localises to the mitochondrion. It carries out the reaction [protein]-C-terminal L-amino acid-glycyl-phosphatidylethanolamide + H2O = [protein]-C-terminal L-amino acid-glycine + a 1,2-diacyl-sn-glycero-3-phosphoethanolamine. The enzyme catalyses [protein]-C-terminal L-amino acid-glycyl-phosphatidylserine + H2O = [protein]-C-terminal L-amino acid-glycine + a 1,2-diacyl-sn-glycero-3-phospho-L-serine. Inhibited by N-ethylmaleimide. Redox-regulated during autophagy since reducing conditions activate ATG4A whereas an oxidizing environment such as the presence of H(2)O(2) inhibits its activity. The cysteine protease activity compounds is inhibited by styrylquinoline compounds 4-28 and LV-320. In terms of biological role, cysteine protease that plays a key role in autophagy by mediating both proteolytic activation and delipidation of ATG8 family proteins. Required for canonical autophagy (macroautophagy), non-canonical autophagy as well as for mitophagy. The protease activity is required for proteolytic activation of ATG8 family proteins: cleaves the C-terminal amino acid of ATG8 proteins MAP1LC3A, MAP1LC3B, MAP1LC3C, GABARAPL1, GABARAPL2 and GABARAP, to reveal a C-terminal glycine. Exposure of the glycine at the C-terminus is essential for ATG8 proteins conjugation to phosphatidylethanolamine (PE) and insertion to membranes, which is necessary for autophagy. Protease activity is also required to counteract formation of high-molecular weight conjugates of ATG8 proteins (ATG8ylation): acts as a deubiquitinating-like enzyme that removes ATG8 conjugated to other proteins, such as ATG3. In addition to the protease activity, also mediates delipidation of ATG8 family proteins. Catalyzes delipidation of PE-conjugated forms of ATG8 proteins during macroautophagy. Also involved in non-canonical autophagy, a parallel pathway involving conjugation of ATG8 proteins to single membranes at endolysosomal compartments, by catalyzing delipidation of ATG8 proteins conjugated to phosphatidylserine (PS). Compared to other members of the family (ATG4A, ATG4C or ATG4C), constitutes the major protein for proteolytic activation of ATG8 proteins, while it displays weaker delipidation activity than other ATG4 paralogs. Involved in phagophore growth during mitophagy independently of its protease activity and of ATG8 proteins: acts by regulating ATG9A trafficking to mitochondria and promoting phagophore-endoplasmic reticulum contacts during the lipid transfer phase of mitophagy. In Rattus norvegicus (Rat), this protein is Cysteine protease ATG4B.